Consider the following 149-residue polypeptide: MTTTYFGPWLIRQSEIFFTTELSFALVNLKPVLPGHVLVCPKRIVPRVKDLTKEEFTDLWLSAQRISSVVEEHFNGDGITFAIQDGKNAGQTVEHVHIHIIPRKKFDFENNDQIYNEIEKEREPRSYEEMEKESSELRPLFEENKNKTF.

The HIT domain occupies 1–115; that stretch reads MTTTYFGPWL…FDFENNDQIY (115 aa). Residues Asn-28, Gln-84, and 90 to 93 each bind substrate; that span reads GQTV. Residues 95–99 carry the Histidine triad motif motif; sequence HVHIH. His-97 acts as the Tele-AMP-histidine intermediate in catalysis. His-99 contributes to the substrate binding site. Residues 120–149 are disordered; the sequence is KEREPRSYEEMEKESSELRPLFEENKNKTF.

In terms of assembly, homodimer. Mg(2+) is required as a cofactor. It depends on Mn(2+) as a cofactor.

The protein resides in the cytoplasm. The catalysed reaction is P(1),P(3)-bis(5'-adenosyl) triphosphate + H2O = AMP + ADP + 2 H(+). Its function is as follows. Cleaves P(1)-P(3)-bis(5'-adenosyl) triphosphate (Ap3A) to yield AMP and ADP. Can also hydrolyze P(1)-P(4)-bis(5'-adenosyl) tetraphosphate (Ap4A), but has extremely low activity with ATP. Modulates transcriptional activation by CTNNB1 and thereby contributes to regulate the expression of genes essential for cell proliferation and survival. Plays a role in the induction of apoptosis via p53/TP53, SRC and AKT1 signaling pathways. Induction of apoptosis depends on the ability of FHIT to bind P(1)-P(3)-bis(5'-adenosyl) triphosphate or related compounds, but does not require its catalytic activity. In Dictyostelium discoideum (Social amoeba), this protein is Bis(5'-adenosyl)-triphosphatase (fhit).